We begin with the raw amino-acid sequence, 349 residues long: Selenide, water dikinase (349 aa).

U19 is an active-site residue. Position 19 (U19) is a non-standard amino acid, selenocysteine. ATP is bound by residues K22 and 50–52 (LGD). Mg(2+) is bound at residue D53. ATP contacts are provided by residues D69, D92, and 140 to 142 (GHT). Residue D92 participates in Mg(2+) binding. D246 is a binding site for Mg(2+).

This sequence belongs to the selenophosphate synthase 1 family. Class I subfamily. In terms of assembly, homodimer. Requires Mg(2+) as cofactor.

The catalysed reaction is hydrogenselenide + ATP + H2O = selenophosphate + AMP + phosphate + 2 H(+). In terms of biological role, synthesizes selenophosphate from selenide and ATP. The chain is Selenide, water dikinase from Methanocaldococcus jannaschii (strain ATCC 43067 / DSM 2661 / JAL-1 / JCM 10045 / NBRC 100440) (Methanococcus jannaschii).